The chain runs to 605 residues: Elongation factor 4 (605 aa).

Positions K11–Q193 constitute a tr-type G domain. GTP contacts are provided by residues D23 to T28 and N140 to D143.

The protein belongs to the TRAFAC class translation factor GTPase superfamily. Classic translation factor GTPase family. LepA subfamily.

It is found in the cell membrane. It carries out the reaction GTP + H2O = GDP + phosphate + H(+). In terms of biological role, required for accurate and efficient protein synthesis under certain stress conditions. May act as a fidelity factor of the translation reaction, by catalyzing a one-codon backward translocation of tRNAs on improperly translocated ribosomes. Back-translocation proceeds from a post-translocation (POST) complex to a pre-translocation (PRE) complex, thus giving elongation factor G a second chance to translocate the tRNAs correctly. Binds to ribosomes in a GTP-dependent manner. This Onion yellows phytoplasma (strain OY-M) protein is Elongation factor 4.